Here is a 246-residue protein sequence, read N- to C-terminus: MFFAVITLFPEMFDAITAYGISGRAAKRDIVQVTCINPRDFAEGNYRRVDERPFGGGPGMVMMAEPLAKAINHAKQLASRAGCVHVPVVYMSPQGKTLNEQAVQQFVDYDGLIVLCGRYEGVDERLIQHYVDQEWSIGDYVLSGGELPAMVLLDSIIRRLPNVMSDEQSAIQDSFVDGLLDCPQYTKPDQFEGLDVPEILKSGHHANIEKWRFLQRYQRTLERRPELIEQVTLTKQQKKWLSDEQG.

S-adenosyl-L-methionine-binding positions include Gly-117 and 137 to 142 (IGDYVL).

Belongs to the RNA methyltransferase TrmD family. In terms of assembly, homodimer.

The protein resides in the cytoplasm. It carries out the reaction guanosine(37) in tRNA + S-adenosyl-L-methionine = N(1)-methylguanosine(37) in tRNA + S-adenosyl-L-homocysteine + H(+). Functionally, specifically methylates guanosine-37 in various tRNAs. This chain is tRNA (guanine-N(1)-)-methyltransferase, found in Acinetobacter baumannii (strain AB307-0294).